The chain runs to 316 residues: Pantothenate kinase (316 aa).

Residue Gly95 to Ser102 coordinates ATP.

The protein belongs to the prokaryotic pantothenate kinase family.

It localises to the cytoplasm. It carries out the reaction (R)-pantothenate + ATP = (R)-4'-phosphopantothenate + ADP + H(+). It functions in the pathway cofactor biosynthesis; coenzyme A biosynthesis; CoA from (R)-pantothenate: step 1/5. This is Pantothenate kinase from Shewanella piezotolerans (strain WP3 / JCM 13877).